A 156-amino-acid chain; its full sequence is Cyanate hydratase (156 aa).

Active-site residues include Arg-96, Glu-99, and Ser-122.

Belongs to the cyanase family.

The enzyme catalyses cyanate + hydrogencarbonate + 3 H(+) = NH4(+) + 2 CO2. Catalyzes the reaction of cyanate with bicarbonate to produce ammonia and carbon dioxide. In Burkholderia vietnamiensis (strain G4 / LMG 22486) (Burkholderia cepacia (strain R1808)), this protein is Cyanate hydratase.